A 396-amino-acid polypeptide reads, in one-letter code: NADH-quinone oxidoreductase subunit D (396 aa).

It belongs to the complex I 49 kDa subunit family. NDH-1 is composed of 14 different subunits. Subunits NuoB, C, D, E, F, and G constitute the peripheral sector of the complex.

Its subcellular location is the cell inner membrane. It carries out the reaction a quinone + NADH + 5 H(+)(in) = a quinol + NAD(+) + 4 H(+)(out). Functionally, NDH-1 shuttles electrons from NADH, via FMN and iron-sulfur (Fe-S) centers, to quinones in the respiratory chain. The immediate electron acceptor for the enzyme in this species is believed to be ubiquinone. Couples the redox reaction to proton translocation (for every two electrons transferred, four hydrogen ions are translocated across the cytoplasmic membrane), and thus conserves the redox energy in a proton gradient. In Brucella abortus (strain S19), this protein is NADH-quinone oxidoreductase subunit D.